We begin with the raw amino-acid sequence, 1364 residues long: MEFYESTYFIILIPSVVITVIFLFFWLFMKETLYDEVLAKQKRDLKFPPTKSDKKKTEKKKNKKKEAQNGNIHESDSESTPRDFKLSDALGTDEEQVAPVPLSATEASAGIRERKKKEKKQKAAQDDHVTKESEGSKSSGKKVEPVPVTKQPTPPSEPAAAKKKPGQKKQKNDDQDTKTDSVASPAKKQEPVLLHQEVKQENVSGKKKVSAKKQKVLVDEPLIQPTTYIPLVDNSDAGALEKREVVEVAKQNMNEGIQKSGGKKMKNETDKENAEVKFKDFVMAMKNMIFTEDEARCVVEVLKEKSGAIHDVLQKASKAESAAAIHQLQDKEKLLAAVKEEAAVAKEQCKQLTQELVAEKERNGLLTAKMRERINALEKEHGTFQSKIHVSYQESQQMKIKFQQRCEQMEAEISHLKQENTILRDAVSTSTNQMESKQAAELNKLRQDCARLVNELGEKNSKLQQEELQKKNAEQAVAQLKVQQQEAERRWEEIQVYLRKRTAEHEAAQQDVQNKLVAKDNEIQSLHSKLTDMVVSKQQLEQRMLQLIESEQKRASKEDSMQLRVQELVEQNDALNAQLQKLHSQMAAQTSASVLAEELHKVIAEKDKQLKQMEDSLGNEHANLTSKEEELKVLQNMNLSLKSEIQKLQALTNEQAAAAHELERMQKSIHIKDDKIRTLEEQLREELAQTVNTKEEFKILKDQNKTLQAEVQKLQALLSEPVQPTFEANKDLLEEMERGMRERDDKIKTVEELLEAGLIQMANKEEELKVLRTENSSLRKELQSLQIQLSEQVSFQSLVDELQKVIHEKDGKIKSVEELLQAEILKVANKEKTVQALTQKIEALKEEVGNSQLEMEKQVSITSQVKELQTLLKGKENQVKTMEALLEEKEKEIVQKGERLKGQQDTVAQLTSKVQELEQQNLQQLQQVPAASQVQDLESRLRGEEEQISKLKAVLEEKEREIASQVKQLQTMQSENESFKVQIQELKQENCKQASLAVQSEELLQVVAGKEKEIASLQNELACQRNAFEQQRKKNNDLREKNWKAMEALASTEKLLQDKVNKTAKEKQQHVEAAEVETRELLQKLFPNVSLPANVSHSEWICGFEKMAKEYLRGASGSEDIKVMEQKLKEAEELHILLQLECEKYKSVLAETEGILQRLQRSVEEEESKWKIKVEESQKELKQMRSSVASLEHEVERLKEEIKEVETLKKEREHLESELEKAEIERSTYVSEVRELKDLLTELQKKLDDSYSEAVRQNEELNLLKMKLSETLSKLKVDQNERQKVAGDLPKAQESLASLEREIGKVVGDANVIENSDVRTESELTDKRLNVAVNLNQDVGHLKKLLVSVSQMLSKGREHYQLVE.

Over 1–6 (MEFYES) the chain is Cytoplasmic. The chain crosses the membrane as a helical; Signal-anchor for type II membrane protein span at residues 7 to 29 (TYFIILIPSVVITVIFLFFWLFM). The Lumenal segment spans residues 30 to 1364 (KETLYDEVLA…KGREHYQLVE (1335 aa)). Composition is skewed to basic and acidic residues over residues 46 to 56 (KFPPTKSDKKK), 73 to 86 (HESD…DFKL), 121 to 135 (QKAA…ESEG), and 170 to 179 (QKNDDQDTKT). The disordered stretch occupies residues 46 to 207 (KFPPTKSDKK…VKQENVSGKK (162 aa)). 10 N-linked (GlcNAc...) asparagine glycosylation sites follow: asparagine 202, asparagine 267, asparagine 623, asparagine 638, asparagine 704, asparagine 775, asparagine 976, asparagine 1061, asparagine 1088, and asparagine 1094. Positions 315-1085 (KASKAESAAA…VETRELLQKL (771 aa)) form a coiled coil. The stretch at 1116-1306 (SGSEDIKVME…ASLEREIGKV (191 aa)) forms a coiled coil.

The protein belongs to the kinectin family. As to quaternary structure, parallel homodimers formed between the membrane-bound and the cytosolic form, and also between 2 cytosolic forms. Both the membrane and cytoplasmic forms seem to be myristoylated.

Its subcellular location is the endoplasmic reticulum membrane. Functionally, receptor for kinesin thus involved in kinesin-driven vesicle motility. This is Kinectin (KTN1) from Gallus gallus (Chicken).